We begin with the raw amino-acid sequence, 459 residues long: MEIPIESLWSQVLERLQVELSRPTFETWIKTASAERLENNCLVIRTPNPFARNWLQKYYINTIAHAVQDILGHPVGIYITVAQGDEVSHFSEREVSWESTNPSSIPESLPHHNHKTTELNSKYVFSRFVVGANNRMAHAASLAVAESPGKEFNPLFLCGGVGLGKTHLMQAIGHYRWKICPDCKIFYVSTEQFTNDLITAIRKDSMQSFREHYRAADVLLVDDIQFLEGKEYTQEEFFYTFNTLHEAGKQVVIASDRPPNQIPSLQERLCSRFSMGLIADIQKPDLETRMAILQKKAEDENIRLPRDVIEYIASNYTSNIRELEGALIRAVAYISIWGLPMTVENITPVLEPPNEKMAASPEAILKVVADNFDVSIDDLKGNSRRREISWARQIGMYLMRQHTSLSLPRIGEEFGGKDHTTVIYSCDKITQLHQGDRTLAQTLRQLSDRINMTSRSQKS.

The domain I, interacts with DnaA modulators stretch occupies residues 1–73 (MEIPIESLWS…AHAVQDILGH (73 aa)). Residues 73-117 (HPVGIYITVAQGDEVSHFSEREVSWESTNPSSIPESLPHHNHKTT) form a domain II region. A domain III, AAA+ region region spans residues 118 to 334 (ELNSKYVFSR…GALIRAVAYI (217 aa)). Residues Gly-162, Gly-164, Lys-165, and Thr-166 each contribute to the ATP site. Residues 335–459 (SIWGLPMTVE…INMTSRSQKS (125 aa)) are domain IV, binds dsDNA.

The protein belongs to the DnaA family. Oligomerizes as a right-handed, spiral filament on DNA at oriC.

Its subcellular location is the cytoplasm. Functionally, plays an essential role in the initiation and regulation of chromosomal replication. ATP-DnaA binds to the origin of replication (oriC) to initiate formation of the DNA replication initiation complex once per cell cycle. Binds the DnaA box (a 9 base pair repeat at the origin) and separates the double-stranded (ds)DNA. Forms a right-handed helical filament on oriC DNA; dsDNA binds to the exterior of the filament while single-stranded (ss)DNA is stabiized in the filament's interior. The ATP-DnaA-oriC complex binds and stabilizes one strand of the AT-rich DNA unwinding element (DUE), permitting loading of DNA polymerase. After initiation quickly degrades to an ADP-DnaA complex that is not apt for DNA replication. Binds acidic phospholipids. The sequence is that of Chromosomal replication initiator protein DnaA from Nostoc punctiforme (strain ATCC 29133 / PCC 73102).